A 269-amino-acid chain; its full sequence is Arginine and glutamate-rich protein 1-B (269 aa).

The segment covering 1–57 (MGRSRSRSSSRSKHSKTSKHSKKRSRSRSRSRDRERKRRSKSRESKRNRRRESRSRS) has biased composition (basic residues). Positions 1-70 (MGRSRSRSSS…TATSRRDRER (70 aa)) are necessary and sufficient for RNA binding. Disordered regions lie at residues 1 to 109 (MGRS…MERQ) and 233 to 269 (RMKLEQERQKQQKEEQKMILGKGKSRPKLSFSLKASE). Composition is skewed to basic and acidic residues over residues 64 to 80 (SRRDRERAASPPERIDI), 89 to 109 (SAVDEKQKKEEEEKKVEMERQ), and 233 to 249 (RMKLEQERQKQQKEEQK). The interval 71–269 (AASPPERIDI…KLSFSLKASE (199 aa)) is necessary and sufficient for transcriptional regulation.

It belongs to the ARGLU1 family.

It is found in the nucleus. The protein localises to the nucleus speckle. It localises to the chromosome. Its function is as follows. Dual function regulator of gene expression; regulator of transcription and modulator of alternative splicing. General coactivator of nuclear receptor-induced gene expression. The sequence is that of Arginine and glutamate-rich protein 1-B (arglu1b) from Danio rerio (Zebrafish).